A 943-amino-acid chain; its full sequence is Neutral alpha-glucosidase AB (943 aa).

A signal peptide spans 1–23 (MRKLVILIILSIVCSLFIGSIES). The segment at 186-231 (FEPISDKPQPLPPKEKKSEEENKEANQEEDNNNNNNDNNEEQQVST) is disordered. Basic and acidic residues predominate over residues 198 to 211 (PKEKKSEEENKEAN). D540 serves as the catalytic Nucleophile. E543 is an active-site residue. D617 acts as the Proton donor in catalysis. 3 N-linked (GlcNAc...) asparagine glycosylation sites follow: N878, N887, and N907.

Belongs to the glycosyl hydrolase 31 family.

The protein localises to the endoplasmic reticulum. Its subcellular location is the golgi apparatus. It catalyses the reaction N(4)-(alpha-D-Glc-(1-&gt;3)-alpha-D-Man-(1-&gt;2)-alpha-D-Man-(1-&gt;2)-alpha-D-Man-(1-&gt;3)-[alpha-D-Man-(1-&gt;2)-alpha-D-Man-(1-&gt;3)-[alpha-D-Man-(1-&gt;2)-alpha-D-Man-(1-&gt;6)]-alpha-D-Man-(1-&gt;6)]-beta-D-Man-(1-&gt;4)-beta-D-GlcNAc-(1-&gt;4)-beta-D-GlcNAc)-L-asparaginyl-[protein] + H2O = N(4)-(alpha-D-Man-(1-&gt;2)-alpha-D-Man-(1-&gt;2)-alpha-D-Man-(1-&gt;3)-[alpha-D-Man-(1-&gt;2)-alpha-D-Man-(1-&gt;3)-[alpha-D-Man-(1-&gt;2)-alpha-D-Man-(1-&gt;6)]-alpha-D-Man-(1-&gt;6)]-beta-D-Man-(1-&gt;4)-beta-D-GlcNAc-(1-&gt;4)-beta-D-GlcNAc)-L-asparaginyl-[protein] (N-glucan mannose isomer 9A1,2,3B1,2,3) + beta-D-glucose. It carries out the reaction N(4)-(alpha-D-Glc-(1-&gt;3)-alpha-D-Glc-(1-&gt;3)-alpha-D-Man-(1-&gt;2)-alpha-D-Man-(1-&gt;2)-alpha-D-Man-(1-&gt;3)-[alpha-D-Man-(1-&gt;2)-alpha-D-Man-(1-&gt;3)-[alpha-D-Man-(1-&gt;2)-alpha-D-Man-(1-&gt;6)]-alpha-D-Man-(1-&gt;6)]-beta-D-Man-(1-&gt;4)-beta-D-GlcNAc-(1-&gt;4)-beta-D-GlcNAc)-L-asparaginyl-[protein] + H2O = N(4)-(alpha-D-Glc-(1-&gt;3)-alpha-D-Man-(1-&gt;2)-alpha-D-Man-(1-&gt;2)-alpha-D-Man-(1-&gt;3)-[alpha-D-Man-(1-&gt;2)-alpha-D-Man-(1-&gt;3)-[alpha-D-Man-(1-&gt;2)-alpha-D-Man-(1-&gt;6)]-alpha-D-Man-(1-&gt;6)]-beta-D-Man-(1-&gt;4)-beta-D-GlcNAc-(1-&gt;4)-beta-D-GlcNAc)-L-asparaginyl-[protein] + beta-D-glucose. The protein operates within glycan metabolism; N-glycan metabolism. Its function is as follows. Cleaves sequentially the 2 innermost alpha-1,3-linked glucose residues from N-linked oligosaccharides on newly synthesized glycoproteins. The polypeptide is Neutral alpha-glucosidase AB (modA) (Dictyostelium discoideum (Social amoeba)).